The sequence spans 1372 residues: DNA-directed RNA polymerase subunit beta (1372 aa).

It belongs to the RNA polymerase beta chain family. The RNAP catalytic core consists of 2 alpha, 1 beta, 1 beta' and 1 omega subunit. When a sigma factor is associated with the core the holoenzyme is formed, which can initiate transcription.

It carries out the reaction RNA(n) + a ribonucleoside 5'-triphosphate = RNA(n+1) + diphosphate. Its function is as follows. DNA-dependent RNA polymerase catalyzes the transcription of DNA into RNA using the four ribonucleoside triphosphates as substrates. The sequence is that of DNA-directed RNA polymerase subunit beta from Nitratidesulfovibrio vulgaris (strain DP4) (Desulfovibrio vulgaris).